We begin with the raw amino-acid sequence, 100 residues long: Small ribosomal subunit protein uS14c (100 aa).

The protein belongs to the universal ribosomal protein uS14 family. Part of the 30S ribosomal subunit.

It localises to the plastid. Its subcellular location is the chloroplast. Its function is as follows. Binds 16S rRNA, required for the assembly of 30S particles. The polypeptide is Small ribosomal subunit protein uS14c (Thalassiosira pseudonana (Marine diatom)).